The chain runs to 362 residues: Peptide chain release factor 1 (362 aa).

Q235 is modified (N5-methylglutamine).

This sequence belongs to the prokaryotic/mitochondrial release factor family. Methylated by PrmC. Methylation increases the termination efficiency of RF1.

The protein resides in the cytoplasm. Its function is as follows. Peptide chain release factor 1 directs the termination of translation in response to the peptide chain termination codons UAG and UAA. This chain is Peptide chain release factor 1, found in Variovorax paradoxus (strain S110).